Here is a 691-residue protein sequence, read N- to C-terminus: Probable E3 ubiquitin-protein ligase RHG1A (691 aa).

5 disordered regions span residues 71–91 (SLGE…NEQR), 151–235 (GPGT…PRGM), 316–336 (SFVV…GSRT), 349–373 (VGGT…SRSI), and 395–501 (QSSR…MHNR). Residues 80–91 (TKDEASSHNEQR) are compositionally biased toward basic and acidic residues. Composition is skewed to polar residues over residues 204–213 (GESSSWTPGS) and 317–328 (FVVSRNPNSTPV). Residues 361–370 (RNLHLDETRS) show a composition bias toward basic and acidic residues. The span at 395–406 (QSSRNVTNGNLN) shows a compositional bias: polar residues. A compositionally biased stretch (low complexity) spans 407–419 (SASSVSRTGSTTS). Residues 429-440 (NLAWTSYQNSPH) show a composition bias toward polar residues. Over residues 454 to 465 (RSLLSSLAADAT) the composition is skewed to low complexity. An RING-type; atypical zinc finger spans residues 637–678 (CCVCQEEYTEGEDMGTLECGHEFHSQCIKEWLKQKNLCPICK).

As to expression, expressed in stems, flowers, green siliques, cauline leaves, seeds and roots.

The catalysed reaction is S-ubiquitinyl-[E2 ubiquitin-conjugating enzyme]-L-cysteine + [acceptor protein]-L-lysine = [E2 ubiquitin-conjugating enzyme]-L-cysteine + N(6)-ubiquitinyl-[acceptor protein]-L-lysine.. It functions in the pathway protein modification; protein ubiquitination. Functionally, probable E3 ubiquitin-protein ligase that may possess E3 ubiquitin ligase activity in vitro. The polypeptide is Probable E3 ubiquitin-protein ligase RHG1A (Arabidopsis thaliana (Mouse-ear cress)).